Here is a 98-residue protein sequence, read N- to C-terminus: DNA-binding protein Fis (98 aa).

A DNA-binding region (H-T-H motif) is located at residues 74 to 93 (QTRAATMLGINRGTLRKKLK).

The protein belongs to the transcriptional regulatory Fis family. In terms of assembly, homodimer.

Its function is as follows. Activates ribosomal RNA transcription. Plays a direct role in upstream activation of rRNA promoters. This Haemophilus ducreyi (strain 35000HP / ATCC 700724) protein is DNA-binding protein Fis.